The chain runs to 568 residues: Sphingosine-1-phosphate lyase 1 (568 aa).

The Lumenal segment spans residues 1–41; it reads MPSTDLLKLKDFEPYLEILEAYSTKAKNYVNGYCTKYEPWQ. A helical; Signal-anchor for type III membrane protein transmembrane segment spans residues 42 to 62; sequence LIAGSVLCTLLVVWVYELIFQ. Residues 63-568 are Cytoplasmic-facing; that stretch reads PESLWSRFKN…NQMNGSPKPR (506 aa). K353 carries the post-translational modification N6-(pyridoxal phosphate)lysine; alternate. K353 bears the N6-acetyllysine; alternate mark. A 3'-nitrotyrosine mark is found at Y356 and Y366. Position 564 is a phosphoserine (S564).

It belongs to the group II decarboxylase family. Sphingosine-1-phosphate lyase subfamily. Homodimer. It depends on pyridoxal 5'-phosphate as a cofactor.

Its subcellular location is the endoplasmic reticulum membrane. The enzyme catalyses sphinganine 1-phosphate = hexadecanal + phosphoethanolamine. It carries out the reaction sphing-4-enine 1-phosphate = (2E)-hexadecenal + phosphoethanolamine. It participates in lipid metabolism; sphingolipid metabolism. Its function is as follows. Cleaves phosphorylated sphingoid bases (PSBs), such as sphingosine-1-phosphate, into fatty aldehydes and phosphoethanolamine. Elevates stress-induced ceramide production and apoptosis. Required for global lipid homeostasis in liver and cholesterol homeostasis in fibroblasts. Involved in the regulation of pro-inflammatory response and neutrophil trafficking. Modulates neuronal autophagy via phosphoethanolamine production which regulates accumulation of aggregate-prone proteins such as APP. Seems to play a role in establishing neuronal contact sites and axonal maintenance. In Rattus norvegicus (Rat), this protein is Sphingosine-1-phosphate lyase 1.